The sequence spans 958 residues: Glycine dehydrogenase (decarboxylating) 2 (958 aa).

The residue at position 707 (Lys-707) is an N6-(pyridoxal phosphate)lysine.

Belongs to the GcvP family. In terms of assembly, the glycine cleavage system is composed of four proteins: P, T, L and H. Requires pyridoxal 5'-phosphate as cofactor.

It catalyses the reaction N(6)-[(R)-lipoyl]-L-lysyl-[glycine-cleavage complex H protein] + glycine + H(+) = N(6)-[(R)-S(8)-aminomethyldihydrolipoyl]-L-lysyl-[glycine-cleavage complex H protein] + CO2. Its function is as follows. The glycine cleavage system catalyzes the degradation of glycine. The P protein binds the alpha-amino group of glycine through its pyridoxal phosphate cofactor; CO(2) is released and the remaining methylamine moiety is then transferred to the lipoamide cofactor of the H protein. This chain is Glycine dehydrogenase (decarboxylating) 2 (gcvP2), found in Pseudomonas aeruginosa (strain ATCC 15692 / DSM 22644 / CIP 104116 / JCM 14847 / LMG 12228 / 1C / PRS 101 / PAO1).